Consider the following 306-residue polypeptide: Agmatinase (306 aa).

Positions 126, 149, 151, 153, 230, and 232 each coordinate Mn(2+).

This sequence belongs to the arginase family. Agmatinase subfamily. Requires Mn(2+) as cofactor.

The enzyme catalyses agmatine + H2O = urea + putrescine. It functions in the pathway amine and polyamine biosynthesis; putrescine biosynthesis via agmatine pathway; putrescine from agmatine: step 1/1. Functionally, catalyzes the formation of putrescine from agmatine. The sequence is that of Agmatinase from Salmonella agona (strain SL483).